Here is a 230-residue protein sequence, read N- to C-terminus: Ribose-5-phosphate isomerase A (230 aa).

Residues 32-35 (TGST), 85-88 (DGAD), and 98-101 (KGGG) contribute to the substrate site. E107 (proton acceptor) is an active-site residue. Position 125 (K125) interacts with substrate.

The protein belongs to the ribose 5-phosphate isomerase family. In terms of assembly, homodimer.

The catalysed reaction is aldehydo-D-ribose 5-phosphate = D-ribulose 5-phosphate. It participates in carbohydrate degradation; pentose phosphate pathway; D-ribose 5-phosphate from D-ribulose 5-phosphate (non-oxidative stage): step 1/1. Catalyzes the reversible conversion of ribose-5-phosphate to ribulose 5-phosphate. The protein is Ribose-5-phosphate isomerase A of Burkholderia ambifaria (strain MC40-6).